The primary structure comprises 373 residues: DNA dC-&gt;dU-editing enzyme APOBEC-3F (373 aa).

CMP/dCMP-type deaminase domains are found at residues 29 to 137 (RRNT…LCRL) and 174 to 321 (DDNY…LRSL). Lys-52 participates in a covalent cross-link: (Microbial infection) Glycyl lysine isopeptide (Lys-Gly) (interchain with G-Cter in ubiquitin). Residues His-65, Cys-96, and Cys-99 each coordinate Zn(2+). Lys-234 is covalently cross-linked ((Microbial infection) Glycyl lysine isopeptide (Lys-Gly) (interchain with G-Cter in ubiquitin)). His-249 lines the Zn(2+) pocket. Glu-251 acts as the Proton donor in catalysis. Zn(2+) is bound by residues Cys-280 and Cys-283. A disulfide bridge connects residues Cys-280 and Cys-283. (Microbial infection) Glycyl lysine isopeptide (Lys-Gly) (interchain with G-Cter in ubiquitin) cross-links involve residues Lys-334, Lys-352, Lys-355, and Lys-358.

The protein belongs to the cytidine and deoxycytidylate deaminase family. As to quaternary structure, homodimer. Interacts with APOBEC3G in an RNA-dependent manner. Interacts with AGO1, AGO2 and AGO3. In terms of assembly, (Microbial infection) Interacts with HIV-1 Vif, leading to its ubiquitination and degradation by the proteasome. In the absence of Vif protein, specifically packaged into HIV-1 virions. Zn(2+) serves as cofactor. (Microbial infection) Following infection by HIV-1, ubiquitinated by a cullin-5-RING E3 ubiquitin-protein ligase complex (ECS complex) hijacked by the HIV-1 Vif protein, leading to its degradation. As to expression, widely expressed. Highly expressed in ovary.

Its subcellular location is the cytoplasm. The protein localises to the P-body. The catalysed reaction is a 2'-deoxycytidine in single-stranded DNA + H2O + H(+) = a 2'-deoxyuridine in single-stranded DNA + NH4(+). With respect to regulation, (Microbial infection) Antiviral activity is neutralized by the HIV-1 virion infectivity factor (Vif), that prevents its incorporation into progeny virions by both inhibiting its translation and/or by inducing its ubiquitination and subsequent degradation by the 26S proteasome. Functionally, DNA deaminase (cytidine deaminase) which acts as an inhibitor of retrovirus replication and retrotransposon mobility via deaminase-dependent and -independent mechanisms. Exhibits antiviral activity against viruse such as HIV-1 or HIV-2. After the penetration of retroviral nucleocapsids into target cells of infection and the initiation of reverse transcription, it can induce the conversion of cytosine to uracil in the minus-sense single-strand viral DNA, leading to G-to-A hypermutations in the subsequent plus-strand viral DNA. The resultant detrimental levels of mutations in the proviral genome, along with a deamination-independent mechanism that works prior to the proviral integration, together exert efficient antiretroviral effects in infected target cells. Selectively targets single-stranded DNA and does not deaminate double-stranded DNA or single- or double-stranded RNA. Exhibits antiviral activity also against hepatitis B virus (HBV), equine infectious anemia virus (EIAV), xenotropic MuLV-related virus (XMRV) and simian foamy virus (SFV) and may inhibit the mobility of LTR and non-LTR retrotransposons. May also play a role in the epigenetic regulation of gene expression through the process of active DNA demethylation. This chain is DNA dC-&gt;dU-editing enzyme APOBEC-3F, found in Homo sapiens (Human).